A 552-amino-acid polypeptide reads, in one-letter code: Protein FAM234A (552 aa).

The segment covering 1–22 (MLDHKDLEAEIHPLKNEERKSQ) has biased composition (basic and acidic residues). Residues 1-40 (MLDHKDLEAEIHPLKNEERKSQENLGNPSKNEDNVKSAPP) are disordered. Residues 1–49 (MLDHKDLEAEIHPLKNEERKSQENLGNPSKNEDNVKSAPPQSRLSRCRA) lie on the Cytoplasmic side of the membrane. Residue serine 21 is modified to Phosphoserine. The helical; Signal-anchor for type II membrane protein transmembrane segment at 50-70 (AAFFLSLFLCLFVVFVVSFVI) threads the bilayer. Topologically, residues 71 to 552 (PCPDRPASQR…FSRLRYQSEA (482 aa)) are extracellular. N-linked (GlcNAc...) asparagine glycosylation is found at asparagine 116, asparagine 314, asparagine 389, and asparagine 473.

The protein belongs to the FAM234 family.

It localises to the membrane. In Homo sapiens (Human), this protein is Protein FAM234A.